Here is a 330-residue protein sequence, read N- to C-terminus: Ketol-acid reductoisomerase (NADP(+)) (330 aa).

The KARI N-terminal Rossmann domain maps to 1 to 181 (MNVYYEKDAD…GGTKAGVIET (181 aa)). NADP(+) is bound by residues 24–27 (YGSQ), Arg47, Ser50, Ser52, and 82–85 (DQNQ). His107 is an active-site residue. An NADP(+)-binding site is contributed by Gly133. One can recognise a KARI C-terminal knotted domain in the interval 182–327 (NFKNETETDL…AKLRNMMSWL (146 aa)). Mg(2+)-binding residues include Asp190, Glu194, Glu226, and Glu230. Ser251 is a binding site for substrate.

The protein belongs to the ketol-acid reductoisomerase family. The cofactor is Mg(2+).

The enzyme catalyses (2R)-2,3-dihydroxy-3-methylbutanoate + NADP(+) = (2S)-2-acetolactate + NADPH + H(+). It carries out the reaction (2R,3R)-2,3-dihydroxy-3-methylpentanoate + NADP(+) = (S)-2-ethyl-2-hydroxy-3-oxobutanoate + NADPH + H(+). It participates in amino-acid biosynthesis; L-isoleucine biosynthesis; L-isoleucine from 2-oxobutanoate: step 2/4. Its pathway is amino-acid biosynthesis; L-valine biosynthesis; L-valine from pyruvate: step 2/4. Involved in the biosynthesis of branched-chain amino acids (BCAA). Catalyzes an alkyl-migration followed by a ketol-acid reduction of (S)-2-acetolactate (S2AL) to yield (R)-2,3-dihydroxy-isovalerate. In the isomerase reaction, S2AL is rearranged via a Mg-dependent methyl migration to produce 3-hydroxy-3-methyl-2-ketobutyrate (HMKB). In the reductase reaction, this 2-ketoacid undergoes a metal-dependent reduction by NADPH to yield (R)-2,3-dihydroxy-isovalerate. In Chlorobium chlorochromatii (strain CaD3), this protein is Ketol-acid reductoisomerase (NADP(+)).